The chain runs to 354 residues: uncharacterized protein (354 aa).

This sequence to yeast YHR056c.

This is an uncharacterized protein from Saccharomyces cerevisiae (strain ATCC 204508 / S288c) (Baker's yeast).